A 231-amino-acid polypeptide reads, in one-letter code: Non-fluorescent flavoprotein (231 aa).

Belongs to the bacterial luciferase oxidoreductase family. In terms of assembly, homodimer. FMN is required as a cofactor.

This Photobacterium phosphoreum protein is Non-fluorescent flavoprotein (luxF).